We begin with the raw amino-acid sequence, 174 residues long: Superoxide dismutase [Cu-Zn] (174 aa).

Positions 1–20 are cleaved as a signal peptide; it reads MMKSLFIASTMVLMAFPAFA. The Cu cation site is built by H68, H70, and H93. Residues C75 and C170 are joined by a disulfide bond. Zn(2+)-binding residues include H93, H102, H110, and D113. H148 provides a ligand contact to Cu cation.

Belongs to the Cu-Zn superoxide dismutase family. In terms of assembly, homodimer. The cofactor is Cu cation. Zn(2+) is required as a cofactor.

It localises to the periplasm. It catalyses the reaction 2 superoxide + 2 H(+) = H2O2 + O2. In terms of biological role, destroys radicals which are normally produced within the cells and which are toxic to biological systems. The protein is Superoxide dismutase [Cu-Zn] (sodC) of Brucella melitensis biotype 1 (strain ATCC 23456 / CCUG 17765 / NCTC 10094 / 16M).